The sequence spans 377 residues: Pyruvate dehydrogenase E1 component subunit alpha, mitochondrial (377 aa).

A mitochondrion-targeting transit peptide spans 1–26; the sequence is MLSNFLKVNSKALGHIRTFASKSGEI. Residues histidine 83, tyrosine 109, arginine 110, glycine 156, valine 158, aspartate 187, glycine 188, alanine 189, asparagine 216, and tyrosine 218 each coordinate pyruvate. 8 residues coordinate thiamine diphosphate: tyrosine 109, arginine 110, glycine 156, valine 158, aspartate 187, glycine 188, alanine 189, and asparagine 216. A Mg(2+)-binding site is contributed by aspartate 187. Asparagine 216 and tyrosine 218 together coordinate Mg(2+). Histidine 283 provides a ligand contact to thiamine diphosphate.

Tetramer of 2 alpha and 2 beta subunits. Thiamine diphosphate is required as a cofactor. The cofactor is Mg(2+).

Its subcellular location is the mitochondrion matrix. It carries out the reaction N(6)-[(R)-lipoyl]-L-lysyl-[protein] + pyruvate + H(+) = N(6)-[(R)-S(8)-acetyldihydrolipoyl]-L-lysyl-[protein] + CO2. E1 activity is regulated by phosphorylation (inactivation) and dephosphorylation (activation) of the alpha subunit. Its function is as follows. The pyruvate dehydrogenase complex catalyzes the overall conversion of pyruvate to acetyl-CoA and CO(2). It contains multiple copies of three enzymatic components: pyruvate dehydrogenase (E1), dihydrolipoamide acetyltransferase (E2) and lipoamide dehydrogenase (E3). This is Pyruvate dehydrogenase E1 component subunit alpha, mitochondrial (pdhA) from Dictyostelium discoideum (Social amoeba).